We begin with the raw amino-acid sequence, 101 residues long: Small ribosomal subunit protein uS14 (101 aa).

Residues 1–21 (MAKVSLIKKNESRKKKSQSLH) form a disordered region. Residues 11-21 (ESRKKKSQSLH) are compositionally biased toward basic residues.

It belongs to the universal ribosomal protein uS14 family. In terms of assembly, part of the 30S ribosomal subunit. Contacts proteins S3 and S10.

Its function is as follows. Binds 16S rRNA, required for the assembly of 30S particles and may also be responsible for determining the conformation of the 16S rRNA at the A site. This Rickettsia canadensis (strain McKiel) protein is Small ribosomal subunit protein uS14.